A 180-amino-acid polypeptide reads, in one-letter code: Translation initiation factor IF-3 (180 aa).

Belongs to the IF-3 family. In terms of assembly, monomer.

It is found in the cytoplasm. In terms of biological role, IF-3 binds to the 30S ribosomal subunit and shifts the equilibrium between 70S ribosomes and their 50S and 30S subunits in favor of the free subunits, thus enhancing the availability of 30S subunits on which protein synthesis initiation begins. The protein is Translation initiation factor IF-3 of Shewanella baltica (strain OS223).